Here is a 359-residue protein sequence, read N- to C-terminus: Serine hydrolase-like protein DDB_G0286239 (359 aa).

The region spanning 38 to 289 (LALHGWLDNA…VPGSHHFHME (252 aa)) is the AB hydrolase-1 domain. S111 is a catalytic residue. The segment at 310 to 359 (FTPSSTTQQQQQQQQSAENKKGDNHNQIAEQDLSTSNTSSPIISKPKPNL) is disordered. A compositionally biased stretch (polar residues) spans 334 to 351 (HNQIAEQDLSTSNTSSPI).

The protein belongs to the AB hydrolase superfamily.

In terms of biological role, probable serine hydrolase. This Dictyostelium discoideum (Social amoeba) protein is Serine hydrolase-like protein DDB_G0286239.